Here is a 177-residue protein sequence, read N- to C-terminus: MARYEKQEKKDFVRKNEQIRVPQVRLIDSDGTMLGVKSVTEALYLAKQQELDLVEISPTAEPPVCKILDYSKYLYEQGKKLKDAKKKTAKTAMKELRIKSRIASHDLEVKIKHIEDFLKRKDMVRLVVVFHGRENQHRDLGEQMLHDVAKRLEPIANVEGGLQVTGNRMSMIFVPKN.

Belongs to the IF-3 family. In terms of assembly, monomer.

The protein resides in the cytoplasm. Its function is as follows. IF-3 binds to the 30S ribosomal subunit and shifts the equilibrium between 70S ribosomes and their 50S and 30S subunits in favor of the free subunits, thus enhancing the availability of 30S subunits on which protein synthesis initiation begins. The polypeptide is Translation initiation factor IF-3 (Elusimicrobium minutum (strain Pei191)).